The sequence spans 223 residues: Ribose-5-phosphate isomerase A (223 aa).

Residues 32–35, 85–88, and 98–101 contribute to the substrate site; these read TGST, DGAD, and KGGG. The Proton acceptor role is filled by Glu107. Lys125 contacts substrate.

This sequence belongs to the ribose 5-phosphate isomerase family. As to quaternary structure, homodimer.

It carries out the reaction aldehydo-D-ribose 5-phosphate = D-ribulose 5-phosphate. Its pathway is carbohydrate degradation; pentose phosphate pathway; D-ribose 5-phosphate from D-ribulose 5-phosphate (non-oxidative stage): step 1/1. Catalyzes the reversible conversion of ribose-5-phosphate to ribulose 5-phosphate. The sequence is that of Ribose-5-phosphate isomerase A from Stutzerimonas stutzeri (strain A1501) (Pseudomonas stutzeri).